The following is a 129-amino-acid chain: Transcription antitermination protein NusB (129 aa).

This sequence belongs to the NusB family.

Functionally, involved in transcription antitermination. Required for transcription of ribosomal RNA (rRNA) genes. Binds specifically to the boxA antiterminator sequence of the ribosomal RNA (rrn) operons. This chain is Transcription antitermination protein NusB, found in Staphylococcus epidermidis (strain ATCC 35984 / DSM 28319 / BCRC 17069 / CCUG 31568 / BM 3577 / RP62A).